The chain runs to 184 residues: MSDYLKASEEKMQKSLSVLKNELAAIRAGRANPALLDRIMVDYYGTPTPLNRLATITAPEPRVLVVQPWDVSKISDIEKAIQKSDLGINPVSDGKVLRLVFPELTEERRKELVKLVHKKAEEAKVAVRQIRRDANDAVKKMEKNGEISEDERKKREEEIQKLTDKYIKEIDKVVEAKEKEIMEI.

The protein belongs to the RRF family.

Its subcellular location is the cytoplasm. In terms of biological role, responsible for the release of ribosomes from messenger RNA at the termination of protein biosynthesis. May increase the efficiency of translation by recycling ribosomes from one round of translation to another. The chain is Ribosome-recycling factor from Thermoanaerobacter pseudethanolicus (strain ATCC 33223 / 39E) (Clostridium thermohydrosulfuricum).